Consider the following 493-residue polypeptide: Glutamyl-tRNA(Gln) amidotransferase subunit A (493 aa).

Active-site charge relay system residues include Lys-81 and Ser-156. Ser-180 acts as the Acyl-ester intermediate in catalysis.

The protein belongs to the amidase family. GatA subfamily. As to quaternary structure, heterotrimer of A, B and C subunits.

It carries out the reaction L-glutamyl-tRNA(Gln) + L-glutamine + ATP + H2O = L-glutaminyl-tRNA(Gln) + L-glutamate + ADP + phosphate + H(+). Allows the formation of correctly charged Gln-tRNA(Gln) through the transamidation of misacylated Glu-tRNA(Gln) in organisms which lack glutaminyl-tRNA synthetase. The reaction takes place in the presence of glutamine and ATP through an activated gamma-phospho-Glu-tRNA(Gln). This is Glutamyl-tRNA(Gln) amidotransferase subunit A from Mycobacterium avium (strain 104).